Reading from the N-terminus, the 237-residue chain is AA9 family lytic polysaccharide monooxygenase C (237 aa).

Positions 1-15 are cleaved as a signal peptide; sequence MKVLAPLILAGAASA. Cu(2+) contacts are provided by histidine 16 and histidine 99. 2 cysteine pairs are disulfide-bonded: cysteine 54–cysteine 185 and cysteine 155–cysteine 237. An N-linked (GlcNAc...) asparagine glycan is attached at asparagine 112. The O2 site is built by histidine 171 and glutamine 180. Residue tyrosine 182 coordinates Cu(2+).

The protein belongs to the polysaccharide monooxygenase AA9 family. The cofactor is Cu(2+).

The protein resides in the secreted. It catalyses the reaction [(1-&gt;4)-beta-D-glucosyl]n+m + reduced acceptor + O2 = 4-dehydro-beta-D-glucosyl-[(1-&gt;4)-beta-D-glucosyl]n-1 + [(1-&gt;4)-beta-D-glucosyl]m + acceptor + H2O.. With respect to regulation, is able to utilize various natural phenolic compounds as reducing agents. Most of these reducing agents are present in plants, either free or as lignin building blocks, such as sinapic acid, or as flavonoids such as catechin and dopamine. Phenolic compounds with 1,2-benzenediol and 1,2,3-benzenetriol moieties yield the highest release of oxidized and non-oxidized glucooligosaccharides from cellulose compared to monophenols or sulfur-containing compounds. Lytic polysaccharide monooxygenase (LPMO) that depolymerizes crystalline and amorphous polysaccharides via the oxidation of scissile alpha- or beta-(1-4)-glycosidic bonds, yielding C4 oxidation products. Catalysis by LPMOs requires the reduction of the active-site copper from Cu(II) to Cu(I) by a reducing agent and H(2)O(2) or O(2) as a cosubstrate. Shows oxidative cleavage of beta-(1-3, 1-4)-glucan from oat spelt or xyloglucan from tamarind seed, in addition to cellulose. In Thermothelomyces thermophilus (strain ATCC 42464 / BCRC 31852 / DSM 1799) (Sporotrichum thermophile), this protein is AA9 family lytic polysaccharide monooxygenase C.